The primary structure comprises 282 residues: Cyclic AMP-dependent transcription factor ATF-5 (282 aa).

The required for protein stabilization induced by IL1B stretch occupies residues 1 to 21 (MSLLATLGLELDRALLPASGL). The residue at position 29 (Lys-29) is an N6-acetyllysine; by EP300. Disordered stretches follow at residues 116-152 (FLDAPPLPPPSPPPLPPPPLPPAPSLPLSLPSFDLPQ) and 173-238 (EEVG…ALEG). The tract at residues 119 to 217 (APPLPPPSPP…GDRKQKKRDQ (99 aa)) is interaction with PTP4A1. Residues 120–140 (PPLPPPSPPPLPPPPLPPAPS) show a composition bias toward pro residues. Residues 141-150 (LPLSLPSFDL) show a composition bias toward low complexity. A compositionally biased stretch (pro residues) spans 178 to 194 (PPLPPPQQPPPPSPPQP). In terms of domain architecture, bZIP spans 208–271 (GDRKQKKRDQ…QYVKDLLIEV (64 aa)). Residues 210–230 (RKQKKRDQNKSAALRYRQRKR) are basic motif. The segment at 236–250 (LEGECQGLEARNREL) is leucine-zipper. Ser-256 is modified (phosphoserine).

This sequence belongs to the bZIP family. In terms of assembly, binds DNA as a dimer. Interacts with PTP4A1/PRL-1. Interacts with CCND3, but not with CCND1 or CCND2. Interacts with HSPA1A or HSPA1B; the interaction protects ATF5 from degradation via proteasome-dependent and caspase-dependent processes. Interacts (via C-terminal region) with NPM1 (via C-terminal region); the interaction leads to loss of association between HSPA1A or HSPA1B and ATF5 and promotes ATF5 degradation via proteasome-dependent and caspase-dependent processes. Interacts with NLK; the interaction stabilizes ATF5 at the protein level in a kinase-independent manner. Interacts with alpha-tubulin, gamma-tubulin members TUBGCP2 and TUBGCP4, PCNT; the ATF5:PCNT:polyglutamylated tubulin (PGT) tripartite unites the mother centriole and the pericentriolar material (PCM) in the centrosome. Interacts with CEBPB and EP300; EP300 is required for ATF5 and CEBPB interaction and DNA binding. Ubiquitinated by CDC34 and UBE2B in order to be degraded by the proteasome. Cisplatin inhibits ubiquitination and proteasome-mediated degradation by inhibiting the interaction with CDC34. Ubiquitination and degradation by the proteasome are inhibited by NLK in a kinase-independent manner. In terms of processing, phosphorylated by NLK, probably at Ser-92, Thr-94, Ser-126 and Ser-190. Post-translationally, acetylated at Lys-29 by EP300, the acetylation enhances the interaction with CEBPB, DNA-binding and transactivation activity. Widely expressed with higher expression levels in liver.

The protein resides in the cytoplasm. Its subcellular location is the nucleus. The protein localises to the cytoskeleton. It is found in the microtubule organizing center. It localises to the centrosome. In terms of biological role, transcription factor that either stimulates or represses gene transcription through binding of different DNA regulatory elements such as cAMP response element (CRE) (consensus: 5'-GTGACGT[AC][AG]-3'), ATF5-specific response element (ARE) (consensus: 5'-C[CT]TCT[CT]CCTT[AT]-3') but also the amino acid response element (AARE), present in many viral and cellular promoters. Critically involved, often in a cell type-dependent manner, in cell survival, proliferation, and differentiation. Its transcriptional activity is enhanced by CCND3 and slightly inhibited by CDK4. Important regulator of the cerebral cortex formation, functions in cerebral cortical neuroprogenitor cells to maintain proliferation and to block differentiation into neurons. Must be down-regulated in order for such cells to exit the cycle and differentiate. Participates in the pathways by which SHH promotes cerebellar granule neuron progenitor cells proliferation. Critical for survival of mature olfactory sensory neurons (OSN), directs expression of OSN-specific genes. May be involved in osteogenic differentiation. Promotes cell proliferation and survival by inducing the expression of EGR1 sinergistically with ELK1. Once acetylated by EP300, binds to ARE sequences on target genes promoters, such as BCL2 and EGR1. Plays an anti-apoptotic role through the transcriptional regulation of BCL2, this function seems to be cell type-dependent. Cooperates with NR1I3/CAR in the transcriptional activation of CYP2B6 in liver. In hepatic cells, represses CRE-dependent transcription and inhibits proliferation by blocking at G2/M phase. May act as a negative regulator of IL1B transduction pathway in liver. Upon IL1B stimulus, cooperates with NLK to activate the transactivation activity of C/EBP subfamily members. Besides its function of transcription factor, acts as a cofactor of CEBPB to activate CEBPA and promote adipocyte differentiation. Regulates centrosome dynamics in a cell-cycle- and centriole-age-dependent manner. Forms 9-foci symmetrical ring scaffold around the mother centriole to control centrosome function and the interaction between centrioles and pericentriolar material. This chain is Cyclic AMP-dependent transcription factor ATF-5 (ATF5), found in Homo sapiens (Human).